A 779-amino-acid chain; its full sequence is GATOR2 complex protein WDR24 (779 aa).

WD repeat units lie at residues 66–106 (SLNF…RNKQ), 112–152 (EHKR…SVST), 155–195 (GQSE…RYER), 199–239 (AHTG…VKEI), 243–285 (QTFA…IPFA), and 289–332 (EHKD…VDRA). 2 disordered regions span residues 506–526 (LETN…EGQA) and 570–590 (DHPS…VSGS). Residues 707–729 (NCSNCKRPMSNKGWICDRCHQCA) form a C4-type zinc finger. Zn(2+) is bound by residues Cys-708, Cys-711, Cys-722, Cys-725, Cys-732, Cys-735, Cys-746, Cys-749, His-751, His-754, His-757, Cys-768, Cys-772, His-774, and Cys-776. An RING-type; atypical zinc finger spans residues 730–779 (SVCAVCHHVVKGLFVWCQGCSHGGHLEHVMEWLKQSKHCPAGCGHLCEYT).

This sequence belongs to the WD repeat WDR24 family. As to quaternary structure, component of the GATOR2 subcomplex, composed of MIOS, SEC13, SEH1L, WDR24 and WDR59. The GATOR2 complex interacts with CASTOR1 and CASTOR2; the interaction is negatively regulated by arginine. The GATOR2 complex interacts with SESN1, SESN2 and SESN3; the interaction is negatively regulated by amino acids.

The protein resides in the lysosome membrane. The enzyme catalyses S-ubiquitinyl-[E2 ubiquitin-conjugating enzyme]-L-cysteine + [acceptor protein]-L-lysine = [E2 ubiquitin-conjugating enzyme]-L-cysteine + N(6)-ubiquitinyl-[acceptor protein]-L-lysine.. Its pathway is protein modification; protein ubiquitination. With respect to regulation, the GATOR2 complex is negatively regulated by the upstream amino acid sensors CASTOR1 and SESN2, which sequester the GATOR2 complex in absence of amino acids. In the presence of abundant amino acids, GATOR2 is released from CASTOR1 and SESN2 and activated. In terms of biological role, catalytic component of the GATOR2 complex, a multiprotein complex that acts as an activator of the amino acid-sensing branch of the mTORC1 signaling pathway. The GATOR2 complex indirectly activates mTORC1 through the inhibition of the GATOR1 subcomplex. GATOR2 probably acts as an E3 ubiquitin-protein ligase toward GATOR1. In the presence of abundant amino acids, the GATOR2 complex mediates ubiquitination of the NPRL2 core component of the GATOR1 complex, leading to GATOR1 inactivation. In the absence of amino acids, GATOR2 is inhibited, activating the GATOR1 complex. In addition to its role in regulation of the mTORC1 complex, promotes the acidification of lysosomes and facilitates autophagic flux. Within the GATOR2 complex, WDR24 constitutes the catalytic subunit that mediates 'Lys-6'-linked ubiquitination of NPRL2. This chain is GATOR2 complex protein WDR24, found in Danio rerio (Zebrafish).